A 251-amino-acid chain; its full sequence is YlmG homolog protein 2, chloroplastic (251 aa).

A chloroplast-targeting transit peptide spans 1–51 (MEASANEPAMKSLKSNPSGPIPNFFVSLSSAFTQTPLVRSNKPNLLLLPPV). Transmembrane regions (helical) follow at residues 119–139 (GFAA…NGLI) and 183–203 (FIPP…VLNA). Residues 232–243 (VRRRRLSSHKDH) show a composition bias toward basic residues. Residues 232–251 (VRRRRLSSHKDHRPSSASMT) are disordered.

This sequence belongs to the YggT family.

The protein resides in the plastid. It localises to the chloroplast thylakoid membrane. In terms of biological role, not required for the biogenesis and accumulation of native cytochrome b6 in the thylakoid membrane. Not functionally involved in the pathway for covalent binding of the c-type heme to cytochrome b6. In Arabidopsis thaliana (Mouse-ear cress), this protein is YlmG homolog protein 2, chloroplastic.